Consider the following 342-residue polypeptide: S-adenosylmethionine:tRNA ribosyltransferase-isomerase (342 aa).

Belongs to the QueA family. Monomer.

The protein resides in the cytoplasm. The enzyme catalyses 7-aminomethyl-7-carbaguanosine(34) in tRNA + S-adenosyl-L-methionine = epoxyqueuosine(34) in tRNA + adenine + L-methionine + 2 H(+). It participates in tRNA modification; tRNA-queuosine biosynthesis. Its function is as follows. Transfers and isomerizes the ribose moiety from AdoMet to the 7-aminomethyl group of 7-deazaguanine (preQ1-tRNA) to give epoxyqueuosine (oQ-tRNA). This is S-adenosylmethionine:tRNA ribosyltransferase-isomerase from Streptococcus agalactiae serotype V (strain ATCC BAA-611 / 2603 V/R).